Here is a 36-residue protein sequence, read N- to C-terminus: SDGRNAGADRKGFGLISQMFKLSCCADPACKHTPGC.

The propeptide occupies serine 1–lysine 21. 2 disulfide bridges follow: cysteine 24-cysteine 30 and cysteine 25-cysteine 36.

Belongs to the conotoxin A superfamily. In terms of tissue distribution, expressed by the venom duct.

The protein resides in the secreted. Its function is as follows. Alpha-conotoxins act on postsynaptic membranes, they bind to the nicotinic acetylcholine receptors (nAChR) and thus inhibit them. The sequence is that of Alpha-conotoxin-like Pu1.3 from Conus pulicarius (Flea-bitten cone).